A 456-amino-acid chain; its full sequence is MEKKTDEVFDALFKLEEIRQILRDSLPTGLDNDEKEAWKSKLSELNEIVQKLDSESVTRPLKKIAGTIEIRSREENYINIQPIQAAGRLTLEARKAIIAYGDGYSTCDTCRKPFRLDKISKPPIGDFHTELARFVNMDQARVVPGARRGFQAVAQTMVQRGDSVIVSSFAHYTEFLAVEGAGGQVREVPVDKNNLITADATATKIEDVIRETGKNPALVMMDHIDYQVANEHDVTGIAKVAHQYDIPFLYNGAYTVGIMPVDGKAIGADFVVGSGHKSMASPAPSGMLATTDEWAPKVLRTTQMVGDLTSRKFGVKEVEMLGCTLMGSNLIAMMASFPEVQKRTQNWDDEVKKSNYFIDALLTIEGSRVLSEYPRKHALSKVDTTGSFDIVAKTHKRKGFYFSDELSARGIVGEFAGATRTWKLSTYGLSWKKVQYLADAFTEIAEKYELPLKSKT.

Pyridoxal 5'-phosphate-binding positions include 146–147 (AR), Asn251, and 274–276 (SGH). Lys277 is modified (N6-(pyridoxal phosphate)lysine).

Belongs to the SepCysS family. In terms of assembly, homodimer. Interacts with SepRS. Pyridoxal 5'-phosphate serves as cofactor.

The enzyme catalyses O-phospho-L-seryl-tRNA(Cys) + hydrogen sulfide + H(+) = L-cysteinyl-tRNA(Cys) + phosphate. In terms of biological role, converts O-phospho-L-seryl-tRNA(Cys) (Sep-tRNA(Cys)) to L-cysteinyl-tRNA(Cys) (Cys-tRNA(Cys)). The protein is O-phospho-L-seryl-tRNA:Cys-tRNA synthase 2 of Methanospirillum hungatei JF-1 (strain ATCC 27890 / DSM 864 / NBRC 100397 / JF-1).